The chain runs to 68 residues: UPF0435 protein SAOUHSC_02093 (68 aa).

It belongs to the UPF0435 family.

The polypeptide is UPF0435 protein SAOUHSC_02093 (Staphylococcus aureus (strain NCTC 8325 / PS 47)).